The chain runs to 1043 residues: F-box DNA helicase 1 (1043 aa).

The disordered stretch occupies residues 30–56 (QRWTNRDPNHGLYPKPRTKRGSRGQGS). Positions 57-64 (QRCIPEFF) match the PIP-box motif. The segment at 101–191 (CALPQEGSAG…QDAGDVGPDP (91 aa)) is disordered. Ser-124 bears the Phosphoserine mark. Positions 138 to 184 (SRWDGVSKKAPRHHLSVPCTRPREARQEAEDSTSRLSAESGETDQDA) constitute an F-box domain. Residues 158–170 (RPREARQEAEDST) show a composition bias toward basic and acidic residues. The 264-residue stretch at 442-705 (THEQQLILNH…FYLTQSFRFG (264 aa)) folds into the UvrD-like helicase ATP-binding domain. An ATP-binding site is contributed by 463 to 470 (AFAGTGKT). Positions 807–811 (KFIRR) match the APIM motif motif.

This sequence belongs to the helicase family. UvrD subfamily. As to quaternary structure, part of the SCF (SKP1-CUL1-F-box) E3 ubiquitin-protein ligase complex SCF(FBH1) composed of CUL1, SKP1, RBX1 and FBH1. Interacts with RAD51. Interacts with RPA2. Interacts (via PIP-box and RanBP2-type zinc finger) with PCNA. Ubiquitinated. Ubiquitination by the DCX(DTL) complex, also named CRL4(CDT2), leading to its degradation: ubiquitination takes place after its localization to DNA damage sites, possibly to facilitate the translesion synthesis (TLS) pathway.

The protein localises to the nucleus. It is found in the chromosome. It carries out the reaction Couples ATP hydrolysis with the unwinding of duplex DNA by translocating in the 3'-5' direction.. It catalyses the reaction ATP + H2O = ADP + phosphate + H(+). The protein operates within protein modification; protein ubiquitination. Functionally, 3'-5' DNA helicase and substrate-recognition component of the SCF(FBH1) E3 ubiquitin ligase complex that plays a key role in response to stalled/damaged replication forks. Involved in genome maintenance by acting as an anti-recombinogenic helicase and preventing extensive strand exchange during homologous recombination: promotes RAD51 filament dissolution from stalled forks, thereby inhibiting homologous recombination and preventing excessive recombination. Also promotes cell death and DNA double-strand breakage in response to replication stress: together with MUS81, promotes the endonucleolytic DNA cleavage following prolonged replication stress via its helicase activity, possibly to eliminate cells with excessive replication stress. Plays a major role in remodeling of stalled DNA forks by catalyzing fork regression, in which the fork reverses and the two nascent DNA strands anneal. In addition to the helicase activity, also acts as the substrate-recognition component of the SCF(FBH1) E3 ubiquitin ligase complex, a complex that mediates ubiquitination of RAD51, leading to regulate RAD51 subcellular location. In Homo sapiens (Human), this protein is F-box DNA helicase 1.